Consider the following 101-residue polypeptide: NADH-quinone oxidoreductase subunit K (101 aa).

The next 3 helical transmembrane spans lie at 4 to 24 (LAHF…GIFL), 30 to 50 (IVLL…FVAF), and 61 to 81 (VFVF…LAIL).

The protein belongs to the complex I subunit 4L family. NDH-1 is composed of 14 different subunits. Subunits NuoA, H, J, K, L, M, N constitute the membrane sector of the complex.

The protein resides in the cell inner membrane. It carries out the reaction a quinone + NADH + 5 H(+)(in) = a quinol + NAD(+) + 4 H(+)(out). Its function is as follows. NDH-1 shuttles electrons from NADH, via FMN and iron-sulfur (Fe-S) centers, to quinones in the respiratory chain. The immediate electron acceptor for the enzyme in this species is believed to be ubiquinone. Couples the redox reaction to proton translocation (for every two electrons transferred, four hydrogen ions are translocated across the cytoplasmic membrane), and thus conserves the redox energy in a proton gradient. This chain is NADH-quinone oxidoreductase subunit K, found in Cupriavidus pinatubonensis (strain JMP 134 / LMG 1197) (Cupriavidus necator (strain JMP 134)).